Reading from the N-terminus, the 173-residue chain is Photosystem I assembly protein Ycf3 (173 aa).

TPR repeat units follow at residues 35–68 (AFSY…EIDP), 72–105 (SYIL…NPSL), and 120–153 (GEQA…APNS).

The protein belongs to the Ycf3 family.

It localises to the plastid. The protein resides in the chloroplast thylakoid membrane. Functionally, essential for the assembly of the photosystem I (PSI) complex. May act as a chaperone-like factor to guide the assembly of the PSI subunits. This is Photosystem I assembly protein Ycf3 from Mesostigma viride (Green alga).